Here is a 484-residue protein sequence, read N- to C-terminus: UDP-glycosyltransferase 73B4 (484 aa).

Residue H18 is the Proton acceptor of the active site. An anthocyanidin-binding residues include H18 and N89. The active-site Charge relay is the D129. Residues A356, Q358, H373, W376, N377, S378, and E381 each contribute to the UDP-alpha-D-glucose site. An anthocyanidin is bound at residue A396. The UDP-alpha-D-glucose site is built by E397 and Q398.

This sequence belongs to the UDP-glycosyltransferase family. In terms of tissue distribution, specifically expressed in roots.

It carries out the reaction a flavonol + UDP-alpha-D-glucose = a flavonol 3-O-beta-D-glucoside + UDP + H(+). Functionally, possesses quercetin 3-O-glucosyltransferase and low 7-O-glucosyltransferase activities in vitro. Also active in vitro on benzoates and benzoate derivatives. Can detoxify the explosive 2,4,6-trinitrotoluene in plant by forming O- or C-glucose conjugates. This Arabidopsis thaliana (Mouse-ear cress) protein is UDP-glycosyltransferase 73B4 (UGT73B4).